We begin with the raw amino-acid sequence, 162 residues long: HTH-type transcriptional regulator IscR (162 aa).

Positions 2 to 131 (RLTSKGRYAV…NNITLGELVN (130 aa)) constitute an HTH rrf2-type domain. Positions 28 to 51 (LADISERQGISLSYLEQLFSRLRK) form a DNA-binding region, H-T-H motif. Positions 92, 98, and 104 each coordinate [2Fe-2S] cluster. A disordered region spans residues 141 to 162 (RQHNEAHRPTRAQDAIDVKLRA).

[2Fe-2S] cluster serves as cofactor.

Regulates the transcription of several operons and genes involved in the biogenesis of Fe-S clusters and Fe-S-containing proteins. The sequence is that of HTH-type transcriptional regulator IscR from Cronobacter sakazakii (strain ATCC BAA-894) (Enterobacter sakazakii).